The chain runs to 74 residues: Translational regulator CsrA (74 aa).

It belongs to the CsrA/RsmA family. Homodimer; the beta-strands of each monomer intercalate to form a hydrophobic core, while the alpha-helices form wings that extend away from the core.

It localises to the cytoplasm. Its function is as follows. A translational regulator that binds mRNA to regulate translation initiation and/or mRNA stability. Usually binds in the 5'-UTR at or near the Shine-Dalgarno sequence preventing ribosome-binding, thus repressing translation. Its main target seems to be the major flagellin gene, while its function is anatagonized by FliW. This Oceanobacillus iheyensis (strain DSM 14371 / CIP 107618 / JCM 11309 / KCTC 3954 / HTE831) protein is Translational regulator CsrA.